The following is an 833-amino-acid chain: Leucine--tRNA ligase (833 aa).

A 'HIGH' region motif is present at residues 41 to 52 (PYPSGAGLHVGH). Positions 610–614 (KMSKS) match the 'KMSKS' region motif. Lys613 provides a ligand contact to ATP.

The protein belongs to the class-I aminoacyl-tRNA synthetase family.

It is found in the cytoplasm. It carries out the reaction tRNA(Leu) + L-leucine + ATP = L-leucyl-tRNA(Leu) + AMP + diphosphate. This is Leucine--tRNA ligase from Streptococcus pneumoniae (strain ATCC 700669 / Spain 23F-1).